Here is a 182-residue protein sequence, read N- to C-terminus: MNKLSTKLVVAIGIGAALYGILGLWGFSIAPNTFIKPALAILTVFGALFGPVAGLLIGLIGHTVTDTIAGWGIWWGWVISSGIIGFSMGLIQKRVGFSVKNGSFNKGDISYLAITGLVGIVIAIIFAGAFDIIVMGEPFDKIVIQVLGATISDVIVFLVLGLPLTIGLAKSNKKHAHLKIEK.

5 helical membrane-spanning segments follow: residues 9–29 (VVAI…GFSI), 40–60 (AILT…IGLI), 71–91 (WGIW…MGLI), 114–134 (ITGL…DIIV), and 142–162 (IVIQ…VLGL).

The protein belongs to the UPF0397 family.

The protein resides in the cell membrane. The sequence is that of UPF0397 protein BCG9842_B2659 from Bacillus cereus (strain G9842).